We begin with the raw amino-acid sequence, 547 residues long: Chaperonin GroEL 1 (547 aa).

Residues 30 to 33 (TLGP), Lys-51, 87 to 91 (DGTTT), Gly-415, and Asp-496 each bind ATP.

This sequence belongs to the chaperonin (HSP60) family. In terms of assembly, forms a cylinder of 14 subunits composed of two heptameric rings stacked back-to-back. Interacts with the co-chaperonin GroES.

The protein resides in the cytoplasm. The enzyme catalyses ATP + H2O + a folded polypeptide = ADP + phosphate + an unfolded polypeptide.. In terms of biological role, together with its co-chaperonin GroES, plays an essential role in assisting protein folding. The GroEL-GroES system forms a nano-cage that allows encapsulation of the non-native substrate proteins and provides a physical environment optimized to promote and accelerate protein folding. This Rhodopseudomonas palustris (strain BisB5) protein is Chaperonin GroEL 1.